Consider the following 354-residue polypeptide: Protein-glutamate methylesterase/protein-glutamine glutaminase 2 (354 aa).

The Response regulatory domain occupies 3–120 (RVVVVDDSMS…PADLADYARD (118 aa)). Asp54 is modified (4-aspartylphosphate). The CheB-type methylesterase domain occupies 164–354 (ATRLSRVIAI…MGARLSEALQ (191 aa)). Catalysis depends on residues Ser176, His202, and Asp298.

The protein belongs to the CheB family. Post-translationally, phosphorylated by CheA. Phosphorylation of the N-terminal regulatory domain activates the methylesterase activity.

It is found in the cytoplasm. The enzyme catalyses [protein]-L-glutamate 5-O-methyl ester + H2O = L-glutamyl-[protein] + methanol + H(+). The catalysed reaction is L-glutaminyl-[protein] + H2O = L-glutamyl-[protein] + NH4(+). Functionally, involved in chemotaxis. Part of a chemotaxis signal transduction system that modulates chemotaxis in response to various stimuli. Catalyzes the demethylation of specific methylglutamate residues introduced into the chemoreceptors (methyl-accepting chemotaxis proteins or MCP) by CheR. Also mediates the irreversible deamidation of specific glutamine residues to glutamic acid. The polypeptide is Protein-glutamate methylesterase/protein-glutamine glutaminase 2 (Burkholderia thailandensis (strain ATCC 700388 / DSM 13276 / CCUG 48851 / CIP 106301 / E264)).